The following is a 198-amino-acid chain: Sortase D (198 aa).

A helical membrane pass occupies residues 7 to 25 (LFIIAAGLVIAGYGGFKLI). Residues 36–46 (KEAKLAAKKPQ) show a composition bias toward basic and acidic residues. The disordered stretch occupies residues 36-67 (KEAKLAAKKPQEASGTKNSTDQAKNKASFKPE). Over residues 48-57 (ASGTKNSTDQ) the composition is skewed to polar residues. Histidine 119 functions as the Proton donor/acceptor in the catalytic mechanism. The active-site Acyl-thioester intermediate is the cysteine 177.

Belongs to the bacterial sortase family. Class D subfamily.

The protein resides in the cell membrane. Functionally, transpeptidase that anchors surface proteins to the cell wall. Recognizes and modifies its substrate by proteolytic cleavage of a C-terminal sorting signal. Following cleavage, a covalent intermediate is formed via a thioester bond between the sortase and its substrate, which is then transferred and covalently attached to the cell wall. This sortase recognizes a Leu-Pro-Asp-Thr-Ser/Ala (LPDTS/A) motif. It has two substrates, YhcR and YfkN. The chain is Sortase D from Bacillus subtilis (strain 168).